Reading from the N-terminus, the 87-residue chain is Small ribosomal subunit protein bS16 (87 aa).

This sequence belongs to the bacterial ribosomal protein bS16 family.

This Onion yellows phytoplasma (strain OY-M) protein is Small ribosomal subunit protein bS16.